The primary structure comprises 426 residues: Diaminobutyrate--2-oxoglutarate transaminase (426 aa).

N6-(pyridoxal phosphate)lysine is present on Lys-272.

This sequence belongs to the class-III pyridoxal-phosphate-dependent aminotransferase family. Pyridoxal 5'-phosphate is required as a cofactor.

It carries out the reaction L-2,4-diaminobutanoate + 2-oxoglutarate = L-aspartate 4-semialdehyde + L-glutamate. It participates in amine and polyamine biosynthesis; ectoine biosynthesis; L-ectoine from L-aspartate 4-semialdehyde: step 1/3. Its function is as follows. Catalyzes reversively the conversion of L-aspartate beta-semialdehyde (ASA) to L-2,4-diaminobutyrate (DABA) by transamination with L-glutamate. This chain is Diaminobutyrate--2-oxoglutarate transaminase (ectB), found in Sporosarcina pasteurii (Bacillus pasteurii).